The chain runs to 468 residues: UDP-N-acetylmuramate--L-alanine ligase (468 aa).

122–128 (GSHGKTT) provides a ligand contact to ATP.

It belongs to the MurCDEF family.

Its subcellular location is the cytoplasm. It carries out the reaction UDP-N-acetyl-alpha-D-muramate + L-alanine + ATP = UDP-N-acetyl-alpha-D-muramoyl-L-alanine + ADP + phosphate + H(+). It participates in cell wall biogenesis; peptidoglycan biosynthesis. Its function is as follows. Cell wall formation. The chain is UDP-N-acetylmuramate--L-alanine ligase from Synechococcus sp. (strain CC9902).